A 444-amino-acid polypeptide reads, in one-letter code: DNA primase DnaG (444 aa).

One can recognise a Toprim domain in the interval 173 to 250; the sequence is DAILIVEGRS…YVTRAPRGLE (78 aa). Mg(2+) is bound by residues glutamate 179, aspartate 221, and aspartate 223. Positions 302–354 are disordered; it reads VTSSVNKTDKYSQKNESKQFKQQKNENKQVKDNSKEKTQKSTEKHNETEETHL. The segment covering 308 to 354 has biased composition (basic and acidic residues); the sequence is KTDKYSQKNESKQFKQQKNENKQVKDNSKEKTQKSTEKHNETEETHL.

This sequence belongs to the archaeal DnaG primase family. As to quaternary structure, forms a ternary complex with MCM helicase and DNA. Component of the archaeal exosome complex. The cofactor is Mg(2+).

It carries out the reaction ssDNA + n NTP = ssDNA/pppN(pN)n-1 hybrid + (n-1) diphosphate.. Its function is as follows. RNA polymerase that catalyzes the synthesis of short RNA molecules used as primers for DNA polymerase during DNA replication. Also part of the exosome, which is a complex involved in RNA degradation. Acts as a poly(A)-binding protein that enhances the interaction between heteromeric, adenine-rich transcripts and the exosome. This Methanosphaera stadtmanae (strain ATCC 43021 / DSM 3091 / JCM 11832 / MCB-3) protein is DNA primase DnaG.